A 237-amino-acid polypeptide reads, in one-letter code: Phosphoribosylaminoimidazole-succinocarboxamide synthase (237 aa).

The protein belongs to the SAICAR synthetase family.

The enzyme catalyses 5-amino-1-(5-phospho-D-ribosyl)imidazole-4-carboxylate + L-aspartate + ATP = (2S)-2-[5-amino-1-(5-phospho-beta-D-ribosyl)imidazole-4-carboxamido]succinate + ADP + phosphate + 2 H(+). It participates in purine metabolism; IMP biosynthesis via de novo pathway; 5-amino-1-(5-phospho-D-ribosyl)imidazole-4-carboxamide from 5-amino-1-(5-phospho-D-ribosyl)imidazole-4-carboxylate: step 1/2. The sequence is that of Phosphoribosylaminoimidazole-succinocarboxamide synthase from Listeria welshimeri serovar 6b (strain ATCC 35897 / DSM 20650 / CCUG 15529 / CIP 8149 / NCTC 11857 / SLCC 5334 / V8).